Consider the following 376-residue polypeptide: Mitogen-activated protein kinase ERK-A (376 aa).

A Protein kinase domain is found at 38–326 (YIKLAYIGEG…VEEALAHPYL (289 aa)). ATP is bound by residues 44–52 (IGEGAYGMV) and Lys-67. Residue Asp-162 is the Proton acceptor of the active site. Thr-198 is subject to Phosphothreonine. The TXY motif lies at 198–200 (TEY). Tyr-200 carries the post-translational modification Phosphotyrosine.

Belongs to the protein kinase superfamily. CMGC Ser/Thr protein kinase family. MAP kinase subfamily. Mg(2+) serves as cofactor. Dually phosphorylated on Thr-198 and Tyr-200, which activates the enzyme. Phosphorylated on tyrosine residue(s) in response to insulin. As to expression, in third instar larvae, expressed in eye imaginal disks. In adults, expressed in head and body.

Its subcellular location is the cytoplasm. It is found in the nucleus. It carries out the reaction L-seryl-[protein] + ATP = O-phospho-L-seryl-[protein] + ADP + H(+). The enzyme catalyses L-threonyl-[protein] + ATP = O-phospho-L-threonyl-[protein] + ADP + H(+). Activated by tyrosine and threonine phosphorylation. Functionally, serine/threonine kinase which acts as an essential component of the MAP kinase signal transduction pathway to regulate proliferation, differentiation and effect cell fate decisions in various tissues. Required downstream of phl/Raf in the sev/sevenless, tor/torso, and EGF receptor homolog Egfr signal transduction pathways. Required for embryonic epithelial tissue repair. During larval development, mediates Ptth/tor signaling leading to the production of ecdysone, a hormone required for the initiation of metamorphosis. The polypeptide is Mitogen-activated protein kinase ERK-A (Drosophila melanogaster (Fruit fly)).